Here is a 122-residue protein sequence, read N- to C-terminus: Small ribosomal subunit protein uS13 (122 aa).

The tract at residues 93-122 (RLSLPVRGQRTKTNSRTRKGKRKTVAGKKK) is disordered. Positions 101 to 122 (QRTKTNSRTRKGKRKTVAGKKK) are enriched in basic residues.

Belongs to the universal ribosomal protein uS13 family. Part of the 30S ribosomal subunit. Forms a loose heterodimer with protein S19. Forms two bridges to the 50S subunit in the 70S ribosome.

Located at the top of the head of the 30S subunit, it contacts several helices of the 16S rRNA. In the 70S ribosome it contacts the 23S rRNA (bridge B1a) and protein L5 of the 50S subunit (bridge B1b), connecting the 2 subunits; these bridges are implicated in subunit movement. Contacts the tRNAs in the A and P-sites. This chain is Small ribosomal subunit protein uS13, found in Chlamydia pneumoniae (Chlamydophila pneumoniae).